We begin with the raw amino-acid sequence, 449 residues long: Heterogeneous nuclear ribonucleoprotein H (449 aa).

N-acetylmethionine is present on Met1. Met2 carries the post-translational modification N-acetylmethionine; in Heterogeneous nuclear ribonucleoprotein H, N-terminally processed. An RRM 1 domain is found at 11–90; that stretch reads FVVKVRGLPW…RYVEVFKSNN (80 aa). Residue Ser23 is modified to Phosphoserine. Lys35 participates in a covalent cross-link: Glycyl lysine isopeptide (Lys-Gly) (interchain with G-Cter in SUMO2). 2 positions are modified to phosphoserine: Ser54 and Ser63. Glycyl lysine isopeptide (Lys-Gly) (interchain with G-Cter in SUMO2) cross-links involve residues Lys87 and Lys98. In terms of domain architecture, RRM 2 spans 111 to 188; the sequence is GFVRLRGLPF…RYIEIFKSSR (78 aa). Arg233 carries the post-translational modification Dimethylated arginine; alternate. Arg233 is modified (omega-N-methylarginine; alternate). The 1-1 repeat unit spans residues 234–249; the sequence is GAYGGGYGGYDDYNGY. Positions 234-433 are 2 X 16 AA Gly-rich approximate repeats; that stretch reads GAYGGGYGGY…YGGQSSMSGY (200 aa). Tyr246 bears the Phosphotyrosine mark. The region spanning 289–364 is the RRM 3 domain; it reads HCVHMRGLPY…RYVELFLNST (76 aa). Ser310 carries the post-translational modification Phosphoserine. 3 tandem repeats follow at residues 354–372, 374–392, and 418–433. A 2 X 19 AA perfect repeats region spans residues 354–392; sequence HRYVELFLNSTAGASGGAYEHRYVELFLNSTAGASGGAY.

As to quaternary structure, part of a ternary complex containing FUBP2, PTBP1, PTBP2 and HNRNPH1. Identified in the spliceosome C complex. Interacts with IGF2BP1. Interacts with CUGBP1; the interaction is RNA-dependent. Interacts with MBNL1; the interaction in RNA-independent.

It localises to the nucleus. It is found in the nucleoplasm. This protein is a component of the heterogeneous nuclear ribonucleoprotein (hnRNP) complexes which provide the substrate for the processing events that pre-mRNAs undergo before becoming functional, translatable mRNAs in the cytoplasm. Mediates pre-mRNA alternative splicing regulation. Inhibits, together with CUGBP1, insulin receptor (IR) pre-mRNA exon 11 inclusion in myoblast. Binds to the IR RNA. Binds poly(RG). The sequence is that of Heterogeneous nuclear ribonucleoprotein H (Hnrnph1) from Mus musculus (Mouse).